The chain runs to 157 residues: Protein Smg (157 aa).

This sequence belongs to the Smg family.

The sequence is that of Protein Smg from Serratia proteamaculans (strain 568).